Reading from the N-terminus, the 159-residue chain is Peptide methionine sulfoxide reductase MsrB (159 aa).

One can recognise a MsrB domain in the interval 14 to 137 (TEKLKENLTE…NSASLKFIAK (124 aa)). The Nucleophile role is filled by C126.

This sequence belongs to the MsrB Met sulfoxide reductase family.

It catalyses the reaction L-methionyl-[protein] + [thioredoxin]-disulfide + H2O = L-methionyl-(R)-S-oxide-[protein] + [thioredoxin]-dithiol. The polypeptide is Peptide methionine sulfoxide reductase MsrB (Hathewaya histolytica (Clostridium histolyticum)).